Reading from the N-terminus, the 128-residue chain is Small ribosomal subunit protein uS11 (128 aa).

The protein belongs to the universal ribosomal protein uS11 family. In terms of assembly, part of the 30S ribosomal subunit. Interacts with proteins S7 and S18. Binds to IF-3.

Its function is as follows. Located on the platform of the 30S subunit, it bridges several disparate RNA helices of the 16S rRNA. Forms part of the Shine-Dalgarno cleft in the 70S ribosome. The chain is Small ribosomal subunit protein uS11 from Wolbachia pipientis wMel.